The chain runs to 351 residues: Anthranilate phosphoribosyltransferase (351 aa).

5-phospho-alpha-D-ribose 1-diphosphate-binding positions include Gly-84, 87 to 88, 95 to 98, 113 to 121, and Ala-125; these read GD, NISS, and KHGNRGASS. Gly-84 is a binding site for anthranilate. Ser-97 contacts Mg(2+). Residue Asn-116 participates in anthranilate binding. Arg-171 contacts anthranilate. Asp-229 and Lys-230 together coordinate Mg(2+).

The protein belongs to the anthranilate phosphoribosyltransferase family. As to quaternary structure, homodimer. Mg(2+) is required as a cofactor.

It carries out the reaction N-(5-phospho-beta-D-ribosyl)anthranilate + diphosphate = 5-phospho-alpha-D-ribose 1-diphosphate + anthranilate. It functions in the pathway amino-acid biosynthesis; L-tryptophan biosynthesis; L-tryptophan from chorismate: step 2/5. In terms of biological role, catalyzes the transfer of the phosphoribosyl group of 5-phosphorylribose-1-pyrophosphate (PRPP) to anthranilate to yield N-(5'-phosphoribosyl)-anthranilate (PRA). This chain is Anthranilate phosphoribosyltransferase, found in Clavibacter michiganensis subsp. michiganensis (strain NCPPB 382).